A 451-amino-acid chain; its full sequence is MKQVKELIGKRVLVLGMAKSGVASALLLARIGAEVVINDSKSRADQPQAGELEAAGIQVVCGGHPLTVLDGCSLLVKNPGIPYTNIVVKEAEARGIPIWTEIELAYLISEAEMVAITGSNGKTTTTTLVKEMLEHSGRKPLIAGNIGTVASEVAQKAKAEHVIVLEVSSFQLMGTNAFQPKVAVWLNIFDAHLDYHGTREDYIAAKARIAANMGPADYLVYNADDPTVVQAIARIGATLVPFSRINVVEDGAYVKDGTIFFKDEPILALADAVLPGAHNVENMLAATAAARLAGATVEQIRHVLSHFPGVKHRLQYVGSWEGRQFYNDSKATNILATKAALSGFAKPVVLIAGGLDRGNDFDELLASLKYVKAVVAYGETKSKLLALAAKANVQAVTAERVQDATEKAVALSQPGDVVLLSPACASWDQYRSFEERGDEFLDYVNTIIKPS.

118 to 124 (GSNGKTT) serves as a coordination point for ATP.

The protein belongs to the MurCDEF family.

The protein resides in the cytoplasm. The enzyme catalyses UDP-N-acetyl-alpha-D-muramoyl-L-alanine + D-glutamate + ATP = UDP-N-acetyl-alpha-D-muramoyl-L-alanyl-D-glutamate + ADP + phosphate + H(+). It functions in the pathway cell wall biogenesis; peptidoglycan biosynthesis. In terms of biological role, cell wall formation. Catalyzes the addition of glutamate to the nucleotide precursor UDP-N-acetylmuramoyl-L-alanine (UMA). This chain is UDP-N-acetylmuramoylalanine--D-glutamate ligase, found in Shouchella clausii (strain KSM-K16) (Alkalihalobacillus clausii).